Reading from the N-terminus, the 403-residue chain is Phosphopentomutase (403 aa).

Mn(2+) contacts are provided by Asp13, Asp298, His303, Asp339, His340, and His351.

This sequence belongs to the phosphopentomutase family. Mn(2+) serves as cofactor.

It localises to the cytoplasm. The enzyme catalyses 2-deoxy-alpha-D-ribose 1-phosphate = 2-deoxy-D-ribose 5-phosphate. It carries out the reaction alpha-D-ribose 1-phosphate = D-ribose 5-phosphate. Its pathway is carbohydrate degradation; 2-deoxy-D-ribose 1-phosphate degradation; D-glyceraldehyde 3-phosphate and acetaldehyde from 2-deoxy-alpha-D-ribose 1-phosphate: step 1/2. Isomerase that catalyzes the conversion of deoxy-ribose 1-phosphate (dRib-1-P) and ribose 1-phosphate (Rib-1-P) to deoxy-ribose 5-phosphate (dRib-5-P) and ribose 5-phosphate (Rib-5-P), respectively. The polypeptide is Phosphopentomutase (Streptococcus pneumoniae serotype 4 (strain ATCC BAA-334 / TIGR4)).